The following is a 381-amino-acid chain: Alkanesulfonate monooxygenase (381 aa).

It belongs to the SsuD family. In terms of assembly, homotetramer.

The enzyme catalyses an alkanesulfonate + FMNH2 + O2 = an aldehyde + FMN + sulfite + H2O + 2 H(+). Functionally, catalyzes the desulfonation of aliphatic sulfonates. This chain is Alkanesulfonate monooxygenase, found in Escherichia coli O9:H4 (strain HS).